The chain runs to 203 residues: Small ribosomal subunit protein uS3 (203 aa).

The protein belongs to the universal ribosomal protein uS3 family. In terms of assembly, part of the 30S ribosomal subunit. Forms a tight complex with proteins S10 and S14.

Its function is as follows. Binds the lower part of the 30S subunit head. Binds mRNA in the 70S ribosome, positioning it for translation. The sequence is that of Small ribosomal subunit protein uS3 from Carsonella ruddii (strain PV).